The chain runs to 136 residues: MVKIRLKRAGRKKLPVYQIVVADARSPRDGKFLEVVGTYQPTAKPHAVTIKKDRIVYWMQTGAQPTATVNSLIRTTGLLYELRLKSMGRSEAEISAEMEKWQEHQAVRRQKRLALKSHRRSAKKEAEAKAATGGEA.

The span at 113–122 (LALKSHRRSA) shows a compositional bias: basic residues. The tract at residues 113-136 (LALKSHRRSAKKEAEAKAATGGEA) is disordered.

Belongs to the bacterial ribosomal protein bS16 family.

The protein is Small ribosomal subunit protein bS16 of Pelodictyon phaeoclathratiforme (strain DSM 5477 / BU-1).